A 193-amino-acid chain; its full sequence is V-type ATP synthase subunit E (193 aa).

The protein belongs to the V-ATPase E subunit family.

Functionally, produces ATP from ADP in the presence of a proton gradient across the membrane. This is V-type ATP synthase subunit E from Anaeromyxobacter sp. (strain Fw109-5).